The following is a 283-amino-acid chain: Diaminopimelate epimerase (283 aa).

Substrate is bound by residues asparagine 13, glutamine 45, and asparagine 65. The active-site Proton donor is cysteine 74. Residues 75–76, asparagine 156, asparagine 190, and 208–209 each bind substrate; these read GN and ER. Cysteine 217 functions as the Proton acceptor in the catalytic mechanism. Position 218–219 (218–219) interacts with substrate; that stretch reads GS.

It belongs to the diaminopimelate epimerase family. Homodimer.

Its subcellular location is the cytoplasm. The enzyme catalyses (2S,6S)-2,6-diaminopimelate = meso-2,6-diaminopimelate. It participates in amino-acid biosynthesis; L-lysine biosynthesis via DAP pathway; DL-2,6-diaminopimelate from LL-2,6-diaminopimelate: step 1/1. Functionally, catalyzes the stereoinversion of LL-2,6-diaminopimelate (L,L-DAP) to meso-diaminopimelate (meso-DAP), a precursor of L-lysine and an essential component of the bacterial peptidoglycan. The protein is Diaminopimelate epimerase of Bartonella quintana (strain Toulouse) (Rochalimaea quintana).